A 183-amino-acid polypeptide reads, in one-letter code: uncharacterized protein (183 aa).

A disordered region spans residues 54-89 (DAASQSDPLPGGDGLTGGDSKATRRTSPRYYPPSEA).

This is an uncharacterized protein from Human cytomegalovirus (strain AD169) (HHV-5).